Here is a 635-residue protein sequence, read N- to C-terminus: Threonine--tRNA ligase (635 aa).

Residues 1–61 (MIQITLPDNS…DHDARLQIIT (61 aa)) enclose the TGS domain. Positions 242-533 (DHRKLGKELD…LIEHHAGALP (292 aa)) are catalytic. Zn(2+)-binding residues include cysteine 333, histidine 384, and histidine 510.

It belongs to the class-II aminoacyl-tRNA synthetase family. As to quaternary structure, homodimer. It depends on Zn(2+) as a cofactor.

It is found in the cytoplasm. The enzyme catalyses tRNA(Thr) + L-threonine + ATP = L-threonyl-tRNA(Thr) + AMP + diphosphate + H(+). In terms of biological role, catalyzes the attachment of threonine to tRNA(Thr) in a two-step reaction: L-threonine is first activated by ATP to form Thr-AMP and then transferred to the acceptor end of tRNA(Thr). Also edits incorrectly charged L-seryl-tRNA(Thr). In Variovorax paradoxus (strain S110), this protein is Threonine--tRNA ligase.